Here is a 618-residue protein sequence, read N- to C-terminus: Alpha-dioxygenase PIOX (618 aa).

His157 serves as the catalytic Proton acceptor. Asp158 contacts Ca(2+). His162 serves as a coordination point for heme b. Ca(2+) contacts are provided by Thr210, Trp212, Asp214, and Ser216. His311 contacts hexadecanoate. Residues His382, Arg479, and Arg483 each coordinate heme b. Glu599 provides a ligand contact to hexadecanoate.

Belongs to the peroxidase family. Heme b serves as cofactor. Requires Ca(2+) as cofactor.

It carries out the reaction a 1,2-saturated fatty acid + O2 = a (2R)-2-hydroperoxy fatty acid. The catalysed reaction is (9Z,12Z)-octadecadienoate + O2 = (2R,9Z,12Z)-2-hydroperoxyoctadecadienoate. It catalyses the reaction hexadecanoate + O2 = (2R)-2-hydroperoxyhexadecanoate. The enzyme catalyses (9Z,12Z,15Z)-octadecatrienoate + O2 = (R)-2-hydroperoxy-(9Z,12Z,15Z)-octadecatrienoate. It carries out the reaction tetradecanoate + O2 = (2R)-2-hydroperoxytetradecanoate. The catalysed reaction is octadecanoate + O2 = (2R)-2-hydroperoxyoctadecanoate. It catalyses the reaction (9Z)-octadecenoate + O2 = (2R,9Z)-2-hydroperoxyoctadecenoate. Functionally, alpha-dioxygenase that catalyzes the primary oxygenation step of a variety of 14-20 carbon fatty acids, containing up to three unsaturated bonds, into their corresponding 2R-hydroperoxides. Involved in the production of oxylipins that function in cell signaling, wound healing, and protection from infection. The polypeptide is Alpha-dioxygenase PIOX (Oryza sativa subsp. japonica (Rice)).